Consider the following 81-residue polypeptide: uncharacterized protein (81 aa).

This is an uncharacterized protein from Escherichia coli (strain K12).